The chain runs to 321 residues: Protein OPG049 (321 aa).

Residues 1–20 form the signal peptide; the sequence is MGTNGVRVFVILYLLAVCGC. N-linked (GlcNAc...) asparagine; by host glycosylation is found at asparagine 36, asparagine 41, asparagine 72, asparagine 79, asparagine 108, asparagine 144, asparagine 220, and asparagine 245. Residues 286–306 traverse the membrane as a helical segment; the sequence is LIMIVLITMLSIILVIIVVIA.

It belongs to the orthopoxvirus OPG049 family.

The protein resides in the host cell membrane. Functionally, plays a role in the spread of virus to neighboring cells ex vivo. The chain is Protein OPG049 (OPG049) from Homo sapiens (Human).